The primary structure comprises 871 residues: Pentatricopeptide repeat-containing protein DOT4, chloroplastic (871 aa).

The N-terminal 28 residues, 1–28 (MAMLVTNLSSSSFCFFSSPHLQNQKEIR), are a transit peptide targeting the chloroplast. 18 PPR repeats span residues 60–94 (SVTD…DIDP), 96–127 (TLCS…GFVI), 128–158 (DSNL…VKIE), 159–193 (KALF…GVEM), 194–228 (DSYT…GFGE), 229–259 (RNSV…MTER), 260–294 (DVIS…GIEI), 295–329 (DLAT…CFSR), 330–360 (EDRF…MSDR), 361–395 (SVVS…GISP), 396–430 (DVYT…DLGF), 431–465 (DIFV…DIIS), 466–497 (WNTI…RFSP), 498–532 (DERT…GYFS), 533–563 (DRHV…IASK), 564–598 (DLVS…GIEA), 599–629 (DEIS…MRHE), and 635–665 (TVEH…MPIP). Residues 670 to 745 (IWGALLCGCR…NPGCSWIEIK (76 aa)) form a type E motif region. The tract at residues 746 to 776 (GRVNIFVAGDSSNPETENIEAFLRKVRARMI) is type E(+) motif. Residues 777 to 871 (EEGYSPLTKY…DGHCSCRGFW (95 aa)) are type DYW motif.

The protein belongs to the PPR family. PCMP-H subfamily. The cofactor is Zn(2+). As to expression, weakly expressed in leaves.

It localises to the plastid. Its subcellular location is the chloroplast. Plays a major role in single RNA editing events in chloroplasts. Acts as a site-recognition transacting factor involved in the edition of the unique site (corresponding to cytidine-488) of rpoC1, which is a plastid-encoded subunit of the chloroplast DNA-directed RNA polymerase. May provide the catalytic activity for editing site conversion. Involved in leaf vasculature patterning. In Arabidopsis thaliana (Mouse-ear cress), this protein is Pentatricopeptide repeat-containing protein DOT4, chloroplastic.